A 193-amino-acid polypeptide reads, in one-letter code: Peptidyl-tRNA hydrolase (193 aa).

TRNA is bound at residue tyrosine 14. Histidine 19 (proton acceptor) is an active-site residue. 3 residues coordinate tRNA: phenylalanine 64, asparagine 66, and asparagine 112.

This sequence belongs to the PTH family. As to quaternary structure, monomer.

The protein resides in the cytoplasm. The enzyme catalyses an N-acyl-L-alpha-aminoacyl-tRNA + H2O = an N-acyl-L-amino acid + a tRNA + H(+). Hydrolyzes ribosome-free peptidyl-tRNAs (with 1 or more amino acids incorporated), which drop off the ribosome during protein synthesis, or as a result of ribosome stalling. In terms of biological role, catalyzes the release of premature peptidyl moieties from peptidyl-tRNA molecules trapped in stalled 50S ribosomal subunits, and thus maintains levels of free tRNAs and 50S ribosomes. The sequence is that of Peptidyl-tRNA hydrolase from Bartonella henselae (strain ATCC 49882 / DSM 28221 / CCUG 30454 / Houston 1) (Rochalimaea henselae).